The sequence spans 534 residues: Pentatricopeptide repeat-containing protein At5g08305 (534 aa).

PPR repeat units lie at residues 41 to 71 (PFVSQTLSFSALSSSGDVDYAYKFLSKLSDP), 72 to 106 (PNYGWNFVIRGFSNSRNPEKSISVYIQMLRFGLLP), 107 to 141 (DHMTYPFLMKSSSRLSNRKLGGSLHCSVVKSGLEW), 142 to 172 (DLFICNTLIHMYGSFRDQASARKLFDEMPHK), 173 to 203 (NLVTWNSILDAYAKSGDVVSARLVFDEMSER), 204 to 238 (DVVTWSSMIDGYVKRGEYNKALEIFDQMMRMGSSK), 240 to 274 (NEVTMVSVICACAHLGALNRGKTVHRYILDVHLPL), 275 to 305 (TVILQTSLIDMYAKCGSIGDAWSVFYRASVK), 308 to 342 (DALMWNAIIGGLASHGFIRESLQLFHKMRESKIDP), 343 to 377 (DEITFLCLLAACSHGGLVKEAWHFFKSLKESGAEP), and 378 to 408 (KSEHYACMVDVLSRAGLVKDAHDFISEMPIK). The tract at residues 413-488 (MLGALLNGCI…IAGHSILDLD (76 aa)) is type E motif. The tract at residues 489 to 519 (GTRHRFIAHDKTHFHSDKIYAVLQLTGAWMN) is type E(+) motif.

This sequence belongs to the PPR family. PCMP-E subfamily.

The polypeptide is Pentatricopeptide repeat-containing protein At5g08305 (PCMP-E105) (Arabidopsis thaliana (Mouse-ear cress)).